The chain runs to 451 residues: 3-carboxy-cis,cis-muconate cycloisomerase (451 aa).

Belongs to the class-II fumarase/aspartase family. In terms of assembly, homotetramer.

It carries out the reaction 2-(carboxymethyl)-5-oxo-2,5-dihydro-2-furoate = 3-carboxy-cis,cis-muconate + H(+). It functions in the pathway aromatic compound metabolism; beta-ketoadipate pathway; 5-oxo-4,5-dihydro-2-furylacetate from 3-carboxy-cis,cis-muconate: step 1/2. Its function is as follows. Catalyzes an anti cycloisomerization. This Acinetobacter baylyi (strain ATCC 33305 / BD413 / ADP1) protein is 3-carboxy-cis,cis-muconate cycloisomerase (pcaB).